Reading from the N-terminus, the 142-residue chain is Large ribosomal subunit protein uL11 (142 aa).

The protein belongs to the universal ribosomal protein uL11 family. As to quaternary structure, part of the ribosomal stalk of the 50S ribosomal subunit. Interacts with L10 and the large rRNA to form the base of the stalk. L10 forms an elongated spine to which L12 dimers bind in a sequential fashion forming a multimeric L10(L12)X complex. In terms of processing, one or more lysine residues are methylated.

In terms of biological role, forms part of the ribosomal stalk which helps the ribosome interact with GTP-bound translation factors. This Aliivibrio fischeri (strain MJ11) (Vibrio fischeri) protein is Large ribosomal subunit protein uL11.